The following is a 750-amino-acid chain: Catalase A (750 aa).

The disordered stretch occupies residues 30-49; sequence ERDTADAHTQQPLTTDHGVR. Catalysis depends on residues H93 and N166. Y380 provides a ligand contact to heme.

The protein belongs to the catalase family. Requires heme as cofactor.

Its subcellular location is the peroxisome matrix. The enzyme catalyses 2 H2O2 = O2 + 2 H2O. Functionally, catalyzes the degradation of hydrogen peroxide (H(2)O(2)) generated by peroxisomal oxidases to water and oxygen, thereby protecting cells from the toxic effects of hydrogen peroxide. The sequence is that of Catalase A (catA) from Aspergillus fumigatus (strain ATCC MYA-4609 / CBS 101355 / FGSC A1100 / Af293) (Neosartorya fumigata).